Here is a 156-residue protein sequence, read N- to C-terminus: Ribosomal RNA large subunit methyltransferase H (156 aa).

S-adenosyl-L-methionine-binding positions include Leu72, Gly104, and 123–128; that span reads LGPMTF.

Belongs to the RNA methyltransferase RlmH family. As to quaternary structure, homodimer.

It localises to the cytoplasm. The catalysed reaction is pseudouridine(1915) in 23S rRNA + S-adenosyl-L-methionine = N(3)-methylpseudouridine(1915) in 23S rRNA + S-adenosyl-L-homocysteine + H(+). Specifically methylates the pseudouridine at position 1915 (m3Psi1915) in 23S rRNA. The chain is Ribosomal RNA large subunit methyltransferase H from Nitratidesulfovibrio vulgaris (strain ATCC 29579 / DSM 644 / CCUG 34227 / NCIMB 8303 / VKM B-1760 / Hildenborough) (Desulfovibrio vulgaris).